Here is a 326-residue protein sequence, read N- to C-terminus: Transcription factor MYB16 (326 aa).

HTH myb-type domains lie at 9–61 (KLGL…TNYL) and 62–116 (RPDI…KKRL). DNA-binding regions (H-T-H motif) lie at residues 37-61 (WRSL…TNYL) and 89-112 (WSAI…NTHL). 2 disordered regions span residues 197–217 (NWTT…STVS) and 280–299 (DRSF…GGDC). The segment covering 208–217 (QLESPTSTVS) has biased composition (polar residues). Residues 280 to 290 (DRSFSGDKNET) are compositionally biased toward basic and acidic residues.

As to expression, expressed in trichomes, epidermis and mesophyll cells of young leaves, stems, petals, sepals, carpels and stamens.

It is found in the nucleus. Involved in the control of epidermal cell morphogenesis in petals. Promotes unidirectional cell expansion once outgrowth has been initiated. Coordinately with WIN1/SHN1, participates in the regulation of cuticle biosynthesis and wax accumulation in reproductive organs and trichomes. Functions in cuticle nanoridge formation in petals and stamens, and in morphogenesis of petal conical cells and trichomes. Functions as a major regulator of cuticle formation in vegetative organs by regulating the cuticle biosynthesis genes CYP86A8/LCR and CER1. The chain is Transcription factor MYB16 from Arabidopsis thaliana (Mouse-ear cress).